Here is a 400-residue protein sequence, read N- to C-terminus: Argininosuccinate synthase (400 aa).

ATP is bound at residue 8–16 (AYSGGLDTS). Y87 is an L-citrulline binding site. G117 is a binding site for ATP. Residues T119, N123, and D124 each contribute to the L-aspartate site. Residue N123 coordinates L-citrulline. L-citrulline is bound by residues R127, S175, E260, and Y272.

It belongs to the argininosuccinate synthase family. Type 1 subfamily. Homotetramer.

The protein localises to the cytoplasm. It catalyses the reaction L-citrulline + L-aspartate + ATP = 2-(N(omega)-L-arginino)succinate + AMP + diphosphate + H(+). It participates in amino-acid biosynthesis; L-arginine biosynthesis; L-arginine from L-ornithine and carbamoyl phosphate: step 2/3. This Mycolicibacterium gilvum (strain PYR-GCK) (Mycobacterium gilvum (strain PYR-GCK)) protein is Argininosuccinate synthase.